Here is a 152-residue protein sequence, read N- to C-terminus: Interleukin-3 (152 aa).

The signal sequence occupies residues 1 to 19 (MSCLPVLLLLQLLVSPGLQ). Residues asparagine 34 and asparagine 89 are each glycosylated (N-linked (GlcNAc...) asparagine). The cysteines at positions 35 and 103 are disulfide-linked.

It belongs to the IL-3 family. Monomer. In terms of tissue distribution, activated T-cells, mast cells, natural killer cells.

Its subcellular location is the secreted. Functionally, granulocyte/macrophage colony-stimulating factors are cytokines that act in hematopoiesis by controlling the production, differentiation, and function of 2 related white cell populations of the blood, the granulocytes and the monocytes-macrophages. Its function is as follows. This CSF induces granulocytes, macrophages, mast cells, stem cells, erythroid cells, eosinophils and megakaryocytes. The polypeptide is Interleukin-3 (IL3) (Hylobates lar (Lar gibbon)).